A 237-amino-acid chain; its full sequence is Orotate phosphoribosyltransferase (237 aa).

Lys29 is a 5-phospho-alpha-D-ribose 1-diphosphate binding site. 37 to 38 lines the orotate pocket; it reads FF. Residues 79–80, Arg105, Lys106, Lys109, His111, and 130–138 contribute to the 5-phospho-alpha-D-ribose 1-diphosphate site; these read YK and DDVMSAGTA. The orotate site is built by Ser134 and Arg162.

It belongs to the purine/pyrimidine phosphoribosyltransferase family. PyrE subfamily. As to quaternary structure, homodimer. Requires Mg(2+) as cofactor.

It catalyses the reaction orotidine 5'-phosphate + diphosphate = orotate + 5-phospho-alpha-D-ribose 1-diphosphate. Its pathway is pyrimidine metabolism; UMP biosynthesis via de novo pathway; UMP from orotate: step 1/2. Functionally, catalyzes the transfer of a ribosyl phosphate group from 5-phosphoribose 1-diphosphate to orotate, leading to the formation of orotidine monophosphate (OMP). The protein is Orotate phosphoribosyltransferase of Polaromonas naphthalenivorans (strain CJ2).